The chain runs to 498 residues: L-amino acid oxidase (498 aa).

The first 11 residues, 1-11 (SLLFLAAVGSC), serve as a signal peptide directing secretion. A disulfide bond links Cys21 and Cys184. FAD is bound by residues 54-55 (MS), 74-75 (EA), 74-78 (EASER), Arg82, and 98-101 (GPMR). Arg101 is a substrate binding site. Asn183 carries an N-linked (GlcNAc...) asparagine glycan. Substrate is bound at residue His234. Position 272 (Val272) interacts with FAD. A disulfide bridge links Cys342 with Cys423. Substrate is bound at residue Tyr383. Residues Glu468, 475 to 480 (GWIDST), and 476 to 480 (WIDST) each bind FAD. Substrate is bound at residue 475–476 (GW).

The protein belongs to the flavin monoamine oxidase family. FIG1 subfamily. As to quaternary structure, homodimer; non-covalently linked. Requires FAD as cofactor. N-glycosylated. Contains 18.73% carbohydrates. In terms of tissue distribution, expressed by the venom gland.

Its subcellular location is the secreted. It carries out the reaction an L-alpha-amino acid + O2 + H2O = a 2-oxocarboxylate + H2O2 + NH4(+). It catalyses the reaction L-leucine + O2 + H2O = 4-methyl-2-oxopentanoate + H2O2 + NH4(+). With respect to regulation, strongly inhibited by glutathione, and moderately inhibited by PMSF, acetate iodine and glutamic acid. Is also inhibited by Zn(2+) ions, but not by Ca(2+), Mg(2+) and Mn(2+). Its function is as follows. Catalyzes an oxidative deamination of predominantly hydrophobic and aromatic L-amino acids, thus producing hydrogen peroxide that may contribute to the diverse toxic effects of this enzyme. This enzyme shows activity on L-Leu. This enzyme inhibits platelet aggregation in human platelet rich plasma induced by ADP (IC(50)=3.2 mg/mL), and shows antibacterial activities on both Gram-positive and Gram-negative bacteria (P.aeruginosa, V.cholerae, S.aureus, E.faecalis and E.coli). These two effects are due to hydrogen peroxide, since they are inhibited by catalase. It also induces edema in mouse paw pads but does not show hemolytic activity. This protein may also have activities in hemorrhage, and apoptosis. This chain is L-amino acid oxidase, found in Bothrops pictus (Desert lancehead).